A 525-amino-acid chain; its full sequence is ATP synthase subunit beta, mitochondrial (525 aa).

A mitochondrion-targeting transit peptide spans 1-44; it reads MLKKQALSGIRRFSLATKQSFVKTSYKLPRKSWLNTAKFNTIRY. Residue 203 to 210 participates in ATP binding; the sequence is GGAGVGKT.

It belongs to the ATPase alpha/beta chains family. In terms of assembly, F-type ATPases have 2 components, CF(1) - the catalytic core - and CF(0) - the membrane proton channel. CF(1) has five subunits: alpha(3), beta(3), gamma(1), delta(1), epsilon(1). CF(0) has three main subunits: a, b and c.

It localises to the mitochondrion. The protein resides in the mitochondrion inner membrane. The catalysed reaction is ATP + H2O + 4 H(+)(in) = ADP + phosphate + 5 H(+)(out). Mitochondrial membrane ATP synthase (F(1)F(0) ATP synthase or Complex V) produces ATP from ADP in the presence of a proton gradient across the membrane which is generated by electron transport complexes of the respiratory chain. F-type ATPases consist of two structural domains, F(1) - containing the extramembraneous catalytic core, and F(0) - containing the membrane proton channel, linked together by a central stalk and a peripheral stalk. During catalysis, ATP synthesis in the catalytic domain of F(1) is coupled via a rotary mechanism of the central stalk subunits to proton translocation. Subunits alpha and beta form the catalytic core in F(1). Rotation of the central stalk against the surrounding alpha(3)beta(3) subunits leads to hydrolysis of ATP in three separate catalytic sites on the beta subunits. The protein is ATP synthase subunit beta, mitochondrial (atp2) of Schizosaccharomyces pombe (strain 972 / ATCC 24843) (Fission yeast).